A 327-amino-acid chain; its full sequence is Ribonucleoside-diphosphate reductase small chain (327 aa).

Fe cation-binding residues include D70, E101, and H104. Y108 is an active-site residue. 3 residues coordinate Fe cation: E164, E198, and H201.

Belongs to the ribonucleoside diphosphate reductase small chain family. In terms of assembly, heterotetramer composed of a homodimer of the large subunit (R1) and a homodimer of the small subunit (R2). Larger multisubunit protein complex are also active, composed of (R1)n(R2)n. Requires Fe cation as cofactor.

The catalysed reaction is a 2'-deoxyribonucleoside 5'-diphosphate + [thioredoxin]-disulfide + H2O = a ribonucleoside 5'-diphosphate + [thioredoxin]-dithiol. In terms of biological role, ribonucleoside-diphosphate reductase holoenzyme provides the precursors necessary for viral DNA synthesis. Allows virus growth in non-dividing cells. Catalyzes the biosynthesis of deoxyribonucleotides from the corresponding ribonucleotides. The polypeptide is Ribonucleoside-diphosphate reductase small chain (African swine fever virus (isolate Tick/Malawi/Lil 20-1/1983) (ASFV)).